Here is a 749-residue protein sequence, read N- to C-terminus: MLANALRLVSNSKKIKYDYDIQKENSVQVGPWTVYSASKKGTNEEVSVFTFDKKNLSTLLKRGSIDSNLKTNYVLELLRKDVSSLSRLRHPSLLQVVEPLEESKSSMSFVTRRIQSMLQDFIKSSNGGFSNYGSSANGKSSGNALEEVEIQKGLLQIIDGLVFLHGSAKVIHYNIRPSSVVVDAKGDWKLCGFSFSQSVESARYEFNDYDFGIPSSLQQSMDFLAPEYITHEIAGPESDVFSFGCLIYSIFNKNQSIINANNHLLSYEKEITSLNSPTFIESKNLPSENLKSLLKETLAVDPKQRASMFELERSPYFTGSAIAALRFLESFPEKLPSEKVSFMESLSKNLTTFPYRIQSQKILPTLLDHLNDQKLVPSLLPCIFEISKGLDSSIFSSKVFTAIFPIISAANSYPERVPLCIFQYMDCLKSKLPSGEFLSKIVPFIYGCFENSSLNVQTTSIQILGTLLDIIDVTTVKSSICPKLYHSFSVTNQLDVKVAILDTFNVFINQKFLDSFAIVDKLLPVLEKVKTREPTVVMGMVTVYISAGAIIPEETVHEQVIPRLWILSVSPSLSLEQYNKCMREIRSLSDAVQKSHAKKLQSKPSSVVPNRITTDPFSSQTKEATSKPSSISPNKATTNIFTSQASLSSQGVARETSSASSYRSYSQRASTPAVTAKSSFHYATPTSGLSNFNSVTPSSSASLYPPLIPSEARTPSVQPANRRVTTPVVNQNTVTSDSSNDLGGWKSLL.

Residues 21-317 (IQKENSVQVG…MFELERSPYF (297 aa)) enclose the Protein kinase domain. Disordered stretches follow at residues 598–677 (KKLQ…VTAK) and 706–749 (PLIP…KSLL). Polar residues predominate over residues 602 to 651 (SKPSSVVPNRITTDPFSSQTKEATSKPSSISPNKATTNIFTSQASLSSQG). Phosphoserine is present on Ser632. Low complexity-rich tracts occupy residues 657-670 (SSASSYRSYSQRAS) and 721-735 (NRRVTTPVVNQNTVT).

It is found in the cytoplasm. This chain is Protein kinase domain-containing protein ppk32 (ppk32), found in Schizosaccharomyces pombe (strain 972 / ATCC 24843) (Fission yeast).